The primary structure comprises 296 residues: Ribosomal RNA small subunit methyltransferase A (296 aa).

Positions 32, 34, 59, 80, 105, and 130 each coordinate S-adenosyl-L-methionine.

This sequence belongs to the class I-like SAM-binding methyltransferase superfamily. rRNA adenine N(6)-methyltransferase family. RsmA subfamily.

The protein localises to the cytoplasm. The enzyme catalyses adenosine(1518)/adenosine(1519) in 16S rRNA + 4 S-adenosyl-L-methionine = N(6)-dimethyladenosine(1518)/N(6)-dimethyladenosine(1519) in 16S rRNA + 4 S-adenosyl-L-homocysteine + 4 H(+). Its function is as follows. Specifically dimethylates two adjacent adenosines (A1518 and A1519) in the loop of a conserved hairpin near the 3'-end of 16S rRNA in the 30S particle. May play a critical role in biogenesis of 30S subunits. The sequence is that of Ribosomal RNA small subunit methyltransferase A from Ligilactobacillus salivarius (strain UCC118) (Lactobacillus salivarius).